Consider the following 584-residue polypeptide: Arginine--tRNA ligase (584 aa).

The short motif at 126 to 136 (PNIAKEMHVGH) is the 'HIGH' region element.

The protein belongs to the class-I aminoacyl-tRNA synthetase family. In terms of assembly, monomer.

It localises to the cytoplasm. It carries out the reaction tRNA(Arg) + L-arginine + ATP = L-arginyl-tRNA(Arg) + AMP + diphosphate. In Synechococcus elongatus (strain ATCC 33912 / PCC 7942 / FACHB-805) (Anacystis nidulans R2), this protein is Arginine--tRNA ligase.